We begin with the raw amino-acid sequence, 106 residues long: Thiosulfate sulfurtransferase GlpE (106 aa).

Residues 16 to 104 (REQGAVLVDV…WRTTYPQETV (89 aa)) form the Rhodanese domain. The active-site Cysteine persulfide intermediate is the cysteine 64.

This sequence belongs to the GlpE family.

Its subcellular location is the cytoplasm. It catalyses the reaction thiosulfate + hydrogen cyanide = thiocyanate + sulfite + 2 H(+). It carries out the reaction thiosulfate + [thioredoxin]-dithiol = [thioredoxin]-disulfide + hydrogen sulfide + sulfite + 2 H(+). Its function is as follows. Transferase that catalyzes the transfer of sulfur from thiosulfate to thiophilic acceptors such as cyanide or dithiols. May function in a CysM-independent thiosulfate assimilation pathway by catalyzing the conversion of thiosulfate to sulfite, which can then be used for L-cysteine biosynthesis. This is Thiosulfate sulfurtransferase GlpE from Pseudomonas syringae pv. syringae (strain B728a).